A 322-amino-acid polypeptide reads, in one-letter code: Short-chain dehydrogenase TIC 32, chloroplastic (322 aa).

NADP(+) contacts are provided by residues 36–42, 88–89, Asn-115, and Thr-136; these read GASSGIG and DL. Ser-170 contacts substrate. Tyr-192 (proton acceptor) is an active-site residue. Residues 298–314 form an interaction with calmodulin region; it reads DTELAKKVWDFSTKLTD.

It belongs to the short-chain dehydrogenases/reductases (SDR) family. As to quaternary structure, part of the Tic complex. Interacts with TIC110. As to expression, expressed in leaves and roots.

It localises to the plastid. The protein localises to the chloroplast inner membrane. Involved in protein precursor import into chloroplasts. Part of the redox regulon consisting of TIC32, TIC 55 and TIC62. The polypeptide is Short-chain dehydrogenase TIC 32, chloroplastic (Arabidopsis thaliana (Mouse-ear cress)).